A 703-amino-acid chain; its full sequence is FERM domain-containing protein 7 (703 aa).

An FERM domain is found at 2-282 (LHLKVQFLDD…EYHAFFRLSE (281 aa)). A coiled-coil region spans residues 525–552 (RNMRIKSLQQDLQELQEAMARTSGRSNI).

As to expression, in the developing cerebral cortex, strong expression is observed in the ventricular and intermediate zones at 13 and 17 dpc. At 17 dpc and P0, expression appears to be restricted to the cortical plate. In neonates, highly expressed in cortex, hippocampus, cerebellum, olfactory bulb and eye with little or no expression in liver, kidney, skeletal muscle or heart muscle (at protein level).

The protein resides in the cell projection. Its subcellular location is the neuron projection. The protein localises to the growth cone. Its function is as follows. Plays a role in neurite development, may be through the activation of the GTPase RAC1. Plays a role in the control of eye movement and gaze stability. This Mus musculus (Mouse) protein is FERM domain-containing protein 7.